Consider the following 155-residue polypeptide: Riboflavin kinase (155 aa).

Residues Gly15, Lys21, Thr27, and Asn29 each coordinate ATP. Mg(2+) contacts are provided by Thr27 and Asn29. The active-site Nucleophile is the Glu79. The ATP site is built by Ile82, His84, and Tyr91. The FMN site is built by Arg104, Lys107, and Phe109.

As to quaternary structure, monomer. Directly interacts with TNFRSF1A death domain; this interaction may be supported by TRADD. In the absence of TNFRSF1A, interacts with TRADD. Independently of TNFRSF1A, interacts with the NADPH oxidase subunit CYBA. It depends on Zn(2+) as a cofactor. The cofactor is Mg(2+).

Its subcellular location is the cytoplasm. The enzyme catalyses riboflavin + ATP = FMN + ADP + H(+). The protein operates within cofactor biosynthesis; FMN biosynthesis; FMN from riboflavin (ATP route): step 1/1. Functionally, catalyzes the phosphorylation of riboflavin (vitamin B2) to form flavin-mononucleotide (FMN), hence rate-limiting enzyme in the synthesis of FAD. Essential for TNF-induced reactive oxygen species (ROS) production. Through its interaction with both TNFRSF1A and CYBA, physically and functionally couples TNFRSF1A to NADPH oxidase. TNF-activation of RFK may enhance the incorporation of FAD in NADPH oxidase, a critical step for the assembly and activation of NADPH oxidase. The polypeptide is Riboflavin kinase (Rfk) (Mus musculus (Mouse)).